Consider the following 204-residue polypeptide: MSQMQARTMAFAGILQALAQVQYIARHGDSDTDAMAASFNTIMVTNPEQPEDVYADKDQLRVGYKWILNQLGDGESKDVEMTRYLVGLLALERKLSRSNAALGMLSERINQIHRQLNHFAITDEQVIANLASIYSDIISNLGPKLQITGNPNVLQRPLVQQKIRALLLAAMRSAVLWRQLGGKRRHLVFARKAIVDTAKKNLTL.

Belongs to the HflD family.

Its subcellular location is the cytoplasm. It localises to the cell inner membrane. In Shewanella amazonensis (strain ATCC BAA-1098 / SB2B), this protein is High frequency lysogenization protein HflD homolog.